We begin with the raw amino-acid sequence, 469 residues long: Adenosylhomocysteinase (469 aa).

Substrate-binding residues include T63, D139, and E164. NAD(+) is bound at residue 165–167; it reads TTT. The substrate site is built by K194 and D198. NAD(+) contacts are provided by residues N199, 228–233, E251, N300, 321–323, and N375; these read GYGDVG and IGH.

This sequence belongs to the adenosylhomocysteinase family. The cofactor is NAD(+).

Its subcellular location is the cytoplasm. It catalyses the reaction S-adenosyl-L-homocysteine + H2O = L-homocysteine + adenosine. It participates in amino-acid biosynthesis; L-homocysteine biosynthesis; L-homocysteine from S-adenosyl-L-homocysteine: step 1/1. In terms of biological role, may play a key role in the regulation of the intracellular concentration of adenosylhomocysteine. In Pseudomonas fluorescens (strain Pf0-1), this protein is Adenosylhomocysteinase.